The following is a 1243-amino-acid chain: Protein MMS22-like (1243 aa).

The protein belongs to the MMS22 family. MMS22L subfamily. Component of the MMS22L-TONSL complex, a complex at least composed of MMS22L and TONSL/NFKBIL2. Interacts with RAD51; interaction is direct. Post-translationally, degraded by the ubiquitin-proteasome system upon replication stress.

It is found in the nucleus. It localises to the chromosome. Component of the MMS22L-TONSL complex, a complex that promotes homologous recombination-mediated repair of double-strand breaks (DSBs) at stalled or collapsed replication forks. The MMS22L-TONSL complex is required to maintain genome integrity during DNA replication. It mediates the assembly of RAD51 filaments on single-stranded DNA (ssDNA): the MMS22L-TONSL complex is recruited to DSBs following histone replacement by histone chaperones and eviction of the replication protein A complex (RPA/RP-A) from DSBs. Following recruitment to DSBs, the TONSL-MMS22L complex promotes recruitment of RAD51 filaments and subsequent homologous recombination. Within the complex, MMS22L acts by binding ssDNA. In Homo sapiens (Human), this protein is Protein MMS22-like.